The chain runs to 467 residues: Chromosomal replication initiator protein DnaA (467 aa).

Residues 1–87 are domain I, interacts with DnaA modulators; it reads MSSSLWLQCL…VGSRPVVAPK (87 aa). Positions 87-130 are domain II; sequence KPAPVRTAADVAAESSAPAQLAQRKPIHKTWDDDSAAADITHRS. A domain III, AAA+ region region spans residues 131-347; that stretch reads NVNPKHKFNN…GALNRVIANA (217 aa). The ATP site is built by Gly-175, Gly-177, Lys-178, and Thr-179. The domain IV, binds dsDNA stretch occupies residues 348 to 467; the sequence is NFTGRPITID…YSNLIRTLSS (120 aa).

This sequence belongs to the DnaA family. In terms of assembly, oligomerizes as a right-handed, spiral filament on DNA at oriC.

The protein resides in the cytoplasm. In terms of biological role, plays an essential role in the initiation and regulation of chromosomal replication. ATP-DnaA binds to the origin of replication (oriC) to initiate formation of the DNA replication initiation complex once per cell cycle. Binds the DnaA box (a 9 base pair repeat at the origin) and separates the double-stranded (ds)DNA. Forms a right-handed helical filament on oriC DNA; dsDNA binds to the exterior of the filament while single-stranded (ss)DNA is stabiized in the filament's interior. The ATP-DnaA-oriC complex binds and stabilizes one strand of the AT-rich DNA unwinding element (DUE), permitting loading of DNA polymerase. After initiation quickly degrades to an ADP-DnaA complex that is not apt for DNA replication. Binds acidic phospholipids. This is Chromosomal replication initiator protein DnaA from Vibrio cholerae serotype O1 (strain ATCC 39315 / El Tor Inaba N16961).